Reading from the N-terminus, the 159-residue chain is Ribosomal RNA large subunit methyltransferase H (159 aa).

Residues Leu76, Gly108, and 127–132 (FGLLTL) contribute to the S-adenosyl-L-methionine site.

The protein belongs to the RNA methyltransferase RlmH family. Homodimer.

It localises to the cytoplasm. The catalysed reaction is pseudouridine(1915) in 23S rRNA + S-adenosyl-L-methionine = N(3)-methylpseudouridine(1915) in 23S rRNA + S-adenosyl-L-homocysteine + H(+). Specifically methylates the pseudouridine at position 1915 (m3Psi1915) in 23S rRNA. In Streptococcus pyogenes serotype M18 (strain MGAS8232), this protein is Ribosomal RNA large subunit methyltransferase H.